The following is a 215-amino-acid chain: 3-isopropylmalate dehydratase small subunit (215 aa).

This sequence belongs to the LeuD family. LeuD type 1 subfamily. As to quaternary structure, heterodimer of LeuC and LeuD.

The enzyme catalyses (2R,3S)-3-isopropylmalate = (2S)-2-isopropylmalate. It participates in amino-acid biosynthesis; L-leucine biosynthesis; L-leucine from 3-methyl-2-oxobutanoate: step 2/4. Its function is as follows. Catalyzes the isomerization between 2-isopropylmalate and 3-isopropylmalate, via the formation of 2-isopropylmaleate. In Xanthomonas axonopodis pv. citri (strain 306), this protein is 3-isopropylmalate dehydratase small subunit.